Here is a 93-residue protein sequence, read N- to C-terminus: Small ribosomal subunit protein uS19 (93 aa).

Belongs to the universal ribosomal protein uS19 family.

Functionally, protein S19 forms a complex with S13 that binds strongly to the 16S ribosomal RNA. In Micrococcus luteus (strain ATCC 4698 / DSM 20030 / JCM 1464 / CCM 169 / CCUG 5858 / IAM 1056 / NBRC 3333 / NCIMB 9278 / NCTC 2665 / VKM Ac-2230) (Micrococcus lysodeikticus), this protein is Small ribosomal subunit protein uS19.